The following is a 565-amino-acid chain: MDSSPVTYSGEPPYKLRRLSPSYPYVSKLRERCASKIETLSEGSARDSLEEEDVSEAMATGAFLATRLYLPSVLPQRITTLTFLDHFKKSRPLPNSDKRLNPIFYRLAYIRDLVGEMELEGIVERGTASRLLGASSPAGFVAGTYTHARDLSKTMSLASVRDAVLAIEAQTRDQSESQLWALLRRGLATASTMKWGALGPQYHPQWCEVSTNAKGIPNNPALQFGQTNERTARSLISALYVARSEAATPDLLVDPGCGQCFVFDESASVPGDAYACGLLMDARTGVVGASLDMLVCDRDPSGVLSPHSTQTTLDFFEIKCRAKYLFDPDLFSPVATAYANLLKHRTAVCLRKFLRSIKNPAVEYFASTSVPGATEALITCNSSWKPREVNETNRRCGDFDRDHIALNLDASSDVWLFSEPDLESETITPARWDTGELALSVPVFANPRHPNFKQILVQAYVLSGHFPDHQLRPFLVTFIGRHRKRCEEGKTFTICDRPEGSPYNLNEVVHSSCAIPILLFVTPVIVDREGCWEDIEIESLTAFNKTADAIWDSDSPADVSEPTSS.

Belongs to the herpesviridae alkaline nuclease family. In terms of assembly, interacts with major DNA-binding protein; this interaction increases the nuclease processivity of the alkaline exonuclease.

Its subcellular location is the host nucleus. The protein localises to the host cytoplasm. Its function is as follows. Plays a role in processing non linear or branched viral DNA intermediates in order to promote the production of mature packaged unit-length linear progeny viral DNA molecules. Exhibits endonuclease and exonuclease activities and accepts both double-stranded and single-stranded DNA as substrate. Exonuclease digestion of DNA is in the 5'-&gt; 3' direction and the products are 5'-monophosphate nucleosides. Additionally, forms a recombinase with the major DNA-binding protein, which displays strand exchange activity. The chain is Alkaline nuclease from Equine herpesvirus 1 (strain V592) (EHV-1).